The primary structure comprises 371 residues: 3-dehydroquinate synthase (371 aa).

NAD(+) is bound by residues 70 to 75 (DAEDGK), 104 to 108 (GAVTD), 128 to 129 (TT), K141, and K150. Residues E183, H246, and H262 each contribute to the Zn(2+) site.

Belongs to the sugar phosphate cyclases superfamily. Dehydroquinate synthase family. Requires Co(2+) as cofactor. Zn(2+) is required as a cofactor. It depends on NAD(+) as a cofactor.

The protein resides in the cytoplasm. The catalysed reaction is 7-phospho-2-dehydro-3-deoxy-D-arabino-heptonate = 3-dehydroquinate + phosphate. Its pathway is metabolic intermediate biosynthesis; chorismate biosynthesis; chorismate from D-erythrose 4-phosphate and phosphoenolpyruvate: step 2/7. Functionally, catalyzes the conversion of 3-deoxy-D-arabino-heptulosonate 7-phosphate (DAHP) to dehydroquinate (DHQ). This Saccharopolyspora erythraea (strain ATCC 11635 / DSM 40517 / JCM 4748 / NBRC 13426 / NCIMB 8594 / NRRL 2338) protein is 3-dehydroquinate synthase.